The following is a 404-amino-acid chain: Subtilisin-like protease 3 (404 aa).

The signal sequence occupies residues 1–20 (MLFSKSLVALVACFLPLIVS). A propeptide spanning residues 21–114 (ATELKLRNAA…VDKDVKVSAY (94 aa)) is cleaved from the precursor. Residues 38 to 112 (SYIVVYKDID…AYVDKDVKVS (75 aa)) enclose the Inhibitor I9 domain. Residues 123–404 (PWGLDRISHR…DNLAYNDDGY (282 aa)) enclose the Peptidase S8 domain. The N-linked (GlcNAc...) asparagine glycan is linked to Asn-133. Catalysis depends on charge relay system residues Asp-158 and His-190. 5 N-linked (GlcNAc...) asparagine glycosylation sites follow: Asn-243, Asn-251, Asn-286, Asn-307, and Asn-340. Ser-347 serves as the catalytic Charge relay system. Residue Asn-366 is glycosylated (N-linked (GlcNAc...) asparagine).

It belongs to the peptidase S8 family.

Its subcellular location is the secreted. Its function is as follows. Secreted subtilisin-like serine endopeptidase. Mediates the degradation of collagen, the major structural protein in the mammalian host. Degrades the nonhelical regions of collagen that function in the cross-linking of the helical components. May function as virulence factor involved in epidermal wing necrosis observed in white nose syndrome (WNS) in bats. The chain is Subtilisin-like protease 3 from Pseudogymnoascus destructans (strain ATCC MYA-4855 / 20631-21) (Bat white-nose syndrome fungus).